The chain runs to 532 residues: Cytochrome P450 monooxygenase pgmC (532 aa).

A helical transmembrane segment spans residues 15–32; it reads ISTLAVLIGFIALLTAWL. Cys-438 is a binding site for heme.

It belongs to the cytochrome P450 family. Requires heme as cofactor.

It localises to the membrane. It participates in pigment biosynthesis. The protein operates within secondary metabolite biosynthesis. Its function is as follows. Cytochrome P450 monooxygenase; part of the gene cluster that mediates the biosynthesis of pleosporalin A, ascomycone A, as well as a third cryptic naphthoquinone derived pigment, all responsible for the coloration of conidia. Involved in the oxidation of fusarubinaldehyde at C-9. PgmC has low substrate-specificity and is also able to use the pgmA product 3-acetonyl-1,6,8-trihydroxy-2-naphthaldehyde as a substrate. The pathway begins with the biosynthesis of the cyclized heptaketide 3-acetonyl-1,6,8-trihydroxy-2-naphthaldehyde by the NR-PKS pgmA. The C-6 hydroxyl group is further methylated by the O-methyltransferase pgmB to yield fusarubinaldehyde which is in turn oxidized by the cytochrome P450 monooxygenase pgmC at C-9. The C-1 hydroxyl group is then methylated spontaneously. Although pgmE, pgmD and pgmH are essential for the production of pleosporalin A, it is not the case for the 2 other final products and it remains difficult to assign a specific function to each enzyme. PgmF and pgmG seem not to be involved in pigment biosynthesis although they were regulated by the cluster-specific transcription factor pgmR. The chain is Cytochrome P450 monooxygenase pgmC from Aspergillus terreus (strain NIH 2624 / FGSC A1156).